Consider the following 191-residue polypeptide: Cell division protein SepF (191 aa).

Residues Met-1–Gly-77 form a disordered region.

Belongs to the SepF family. Homodimer. Interacts with FtsZ.

The protein localises to the cytoplasm. Its function is as follows. Cell division protein that is part of the divisome complex and is recruited early to the Z-ring. Probably stimulates Z-ring formation, perhaps through the cross-linking of FtsZ protofilaments. Its function overlaps with FtsA. In Synechococcus sp. (strain JA-2-3B'a(2-13)) (Cyanobacteria bacterium Yellowstone B-Prime), this protein is Cell division protein SepF.